Here is a 400-residue protein sequence, read N- to C-terminus: Aminomethyltransferase, mitochondrial (400 aa).

Substrate contacts are provided by Glu221, Arg250, and Tyr397.

The protein belongs to the GcvT family. Component of the glycine decarboxylase complex (GDC), which is composed of four proteins: P, T, L and H.

The protein resides in the mitochondrion. It catalyses the reaction N(6)-[(R)-S(8)-aminomethyldihydrolipoyl]-L-lysyl-[protein] + (6S)-5,6,7,8-tetrahydrofolate = N(6)-[(R)-dihydrolipoyl]-L-lysyl-[protein] + (6R)-5,10-methylene-5,6,7,8-tetrahydrofolate + NH4(+). Functionally, the glycine cleavage system (glycine decarboxylase complex) catalyzes the degradation of glycine. This chain is Aminomethyltransferase, mitochondrial (GCV1), found in Saccharomyces cerevisiae (strain ATCC 204508 / S288c) (Baker's yeast).